The chain runs to 373 residues: mRNA export factor rae-1 (373 aa).

At Met1 the chain carries N-acetylmethionine. 4 WD repeats span residues 40-82, 87-126, 128-169, and 276-315; these read APED…TFEG, NIPAPILDIAWIEDSSKIFIACADKEARLWDLASNQVAVV, THDG…NQTQ, and QEIYAVNDICFHPQHGTLVTIGSDGRYSMWDKDARTKLKT.

The protein belongs to the WD repeat rae1 family. In terms of assembly, the nuclear pore complex (NPC) constitutes the exclusive means of nucleocytoplasmic transport. NPCs allow the passive diffusion of ions and small molecules and the active, nuclear transport receptor-mediated bidirectional transport of macromolecules such as proteins, RNAs, ribonucleoparticles (RNPs), and ribosomal subunits across the nuclear envelope. Interacts with rpm-1. As to expression, expressed along the ventral and dorsal nerve cords.

It localises to the nucleus. The protein resides in the nuclear pore complex. Its subcellular location is the cell projection. It is found in the axon. The protein localises to the synapse. Its function is as follows. Functions as a component of the nuclear pore complex (NPC). NPC components, collectively referred to as nucleoporins (NUPs), can play the role of both NPC structural components and of docking or interaction partners for transiently associated nuclear transport factors. It is specifically important for nuclear mRNA export. Has a role in neuronal development, where it acts downstream of rpm-1 to control axon termination and synapse formation in anterior lateral microtubule (ALM) and posterior lateral microtubule (PLM) mechanosensory neurons. The protein is mRNA export factor rae-1 of Caenorhabditis elegans.